We begin with the raw amino-acid sequence, 455 residues long: Probable glycine dehydrogenase (decarboxylating) subunit 1 (455 aa).

Belongs to the GcvP family. N-terminal subunit subfamily. In terms of assembly, the glycine cleavage system is composed of four proteins: P, T, L and H. In this organism, the P 'protein' is a heterodimer of two subunits.

The enzyme catalyses N(6)-[(R)-lipoyl]-L-lysyl-[glycine-cleavage complex H protein] + glycine + H(+) = N(6)-[(R)-S(8)-aminomethyldihydrolipoyl]-L-lysyl-[glycine-cleavage complex H protein] + CO2. Its function is as follows. The glycine cleavage system catalyzes the degradation of glycine. The P protein binds the alpha-amino group of glycine through its pyridoxal phosphate cofactor; CO(2) is released and the remaining methylamine moiety is then transferred to the lipoamide cofactor of the H protein. This chain is Probable glycine dehydrogenase (decarboxylating) subunit 1, found in Francisella tularensis subsp. holarctica (strain LVS).